A 483-amino-acid chain; its full sequence is Glutamyl-tRNA(Gln) amidotransferase subunit A (483 aa).

Active-site charge relay system residues include Lys-77 and Ser-152. The Acyl-ester intermediate role is filled by Ser-176.

It belongs to the amidase family. GatA subfamily. As to quaternary structure, heterotrimer of A, B and C subunits.

It catalyses the reaction L-glutamyl-tRNA(Gln) + L-glutamine + ATP + H2O = L-glutaminyl-tRNA(Gln) + L-glutamate + ADP + phosphate + H(+). Its function is as follows. Allows the formation of correctly charged Gln-tRNA(Gln) through the transamidation of misacylated Glu-tRNA(Gln) in organisms which lack glutaminyl-tRNA synthetase. The reaction takes place in the presence of glutamine and ATP through an activated gamma-phospho-Glu-tRNA(Gln). This is Glutamyl-tRNA(Gln) amidotransferase subunit A from Shouchella clausii (strain KSM-K16) (Alkalihalobacillus clausii).